The sequence spans 269 residues: Eukaryotic translation initiation factor 3 subunit G-1 (269 aa).

The 79-residue stretch at 188–266 (AAIRISNLSE…LILSVEWSKP (79 aa)) folds into the RRM domain.

Belongs to the eIF-3 subunit G family. As to quaternary structure, component of the eukaryotic translation initiation factor 3 (eIF-3) complex. The eIF-3 complex interacts with pix.

It is found in the cytoplasm. Its function is as follows. RNA-binding component of the eukaryotic translation initiation factor 3 (eIF-3) complex, which is involved in protein synthesis of a specialized repertoire of mRNAs and, together with other initiation factors, stimulates binding of mRNA and methionyl-tRNAi to the 40S ribosome. The eIF-3 complex specifically targets and initiates translation of a subset of mRNAs involved in cell proliferation. This subunit can bind 18S rRNA. The sequence is that of Eukaryotic translation initiation factor 3 subunit G-1 from Drosophila virilis (Fruit fly).